Consider the following 98-residue polypeptide: Large ribosomal subunit protein uL23c (98 aa).

The protein belongs to the universal ribosomal protein uL23 family. In terms of assembly, part of the 50S ribosomal subunit.

Its subcellular location is the plastid. Binds to 23S rRNA. The protein is Large ribosomal subunit protein uL23c (rpl23) of Euglena longa (Euglenophycean alga).